The chain runs to 553 residues: 5'-nucleotidase (553 aa).

The first 21 residues, Met-1 to Gly-21, serve as a signal peptide directing secretion. A lipid anchor (N-palmitoyl cysteine) is attached at Cys-22. The S-diacylglycerol cysteine moiety is linked to residue Cys-22. 7 residues coordinate a divalent metal cation: Asp-45, His-47, Asp-88, Asn-120, His-221, His-256, and Gln-258. Substrate is bound by residues Phe-432 and Tyr-501 to Asp-507.

The protein belongs to the 5'-nucleotidase family. Chloride serves as cofactor. The cofactor is Mg(2+).

It localises to the cell outer membrane. It catalyses the reaction a ribonucleoside 5'-phosphate + H2O = a ribonucleoside + phosphate. Its function is as follows. Degradation of extracellular 5'-nucleotides for nutritional needs. The polypeptide is 5'-nucleotidase (nutA) (Vibrio vulnificus (strain CMCP6)).